Here is a 521-residue protein sequence, read N- to C-terminus: Cytochrome P450 monooxygenase sdnF (521 aa).

The chain crosses the membrane as a helical span at residues Tyr19 to Ile39. 5 N-linked (GlcNAc...) asparagine glycosylation sites follow: Asn178, Asn186, Asn191, Asn309, and Asn416. Cys460 is a binding site for heme.

It belongs to the cytochrome P450 family. The cofactor is heme.

The protein resides in the membrane. The protein operates within antibiotic biosynthesis. Its function is as follows. Cytochrome P450 monooxygenase; part of the gene cluster that mediates the biosynthesis of sordarin and hypoxysordarin, glycoside antibiotics with a unique tetracyclic diterpene aglycone structure. First, the geranylgeranyl diphosphate synthase sdnC constructs GGDP from farnesyl diphosphate and isopentenyl diphosphate. The diterpene cyclase sdnA then catalyzes the cyclization of GGDP to afford cycloaraneosene. Cycloaraneosene is then hydroxylated four times by the putative cytochrome P450 monooxygenases sdnB, sdnE, sdnF and sdnH to give a hydroxylated cycloaraneosene derivative such as cycloaraneosene-8,9,13,19-tetraol. Although the order of the hydroxylations is unclear, at least C8, C9 and C13 of the cycloaraneosene skeleton are hydroxylated before the sordaricin formation. Dehydration of the 13-hydroxy group of the hydroxylated cycloaraneosene derivative might be catalyzed by an unassigned hypothetical protein such as sdnG and sdnP to construct the cyclopentadiene moiety. The FAD-dependent oxidoreductase sdnN is proposed to catalyze the oxidation at C9 of the hydroxylated cycloaraneosene derivative and also catalyze the Baeyer-Villiger oxidation to give the lactone intermediate. The presumed lactone intermediate would be hydrolyzed to give an acrolein moiety and a carboxylate moiety. Then, [4+2]cycloaddition would occur between the acrolein moiety and the cyclopentadiene moiety to give sordaricin. SdnN might also be involved in the [4+2]cycloaddition after the hypothesized oxidation to accommodate the oxidized product and prompt the [4+2]cycloaddition. GDP-6-deoxy-D-altrose may be biosynthesized from GDP-D-mannose by the putative GDP-mannose-4,6-dehydratase sdnI and the short-chain dehydrogenase sdnK. The glycosyltransferase sdnJ catalyzes the attachment of 6-deoxy-D-altrose onto the 19-hydroxy group of sordaricin to give 4'-O-demethylsordarin. The methyltransferase sdnD would complete the biosynthesis of sordarin. Sordarin can be further modified into hypoxysordarin. The unique acyl chain at the 3'-hydroxy group of hypoxysordarin would be constructed by an iterative type I PKS sdnO and the trans-acting polyketide methyltransferase sdnL. SdnL would be responsible for the introduction of an alpha-methyl group of the polyketide chain. Alternatively, the beta-lactamase-like protein sdnR might be responsible for the cleavage and transfer of the polyketide chain from the PKS sdnO to sordarin. Two putative cytochrome P450 monooxygenases, sdnQ and sdnT, might catalyze the epoxidations of the polyketide chain to complete the biosynthesis of hypoxysordarin. Transcriptional regulators sdnM and sdnS are presumably encoded for the transcriptional regulation of the expression of the sdn gene cluster. This is Cytochrome P450 monooxygenase sdnF from Sordaria araneosa (Pleurage araneosa).